The primary structure comprises 759 residues: uncharacterized protein (759 aa).

Positions 352-556 (VIQKLSDYAF…KDEDIADFSI (205 aa)) constitute an MCM domain. 397–404 (SDPGVGKS) contacts ATP.

It belongs to the MCM family.

This is an uncharacterized protein from Methanocaldococcus jannaschii (strain ATCC 43067 / DSM 2661 / JAL-1 / JCM 10045 / NBRC 100440) (Methanococcus jannaschii).